We begin with the raw amino-acid sequence, 384 residues long: L-cysteine:1D-myo-inositol 2-amino-2-deoxy-alpha-D-glucopyranoside ligase (384 aa).

Cys-16 is a binding site for Zn(2+). L-cysteinyl-5'-AMP-binding positions include 16 to 19 (CGIT), Thr-31, and 54 to 56 (NVT). The short motif at 18-28 (ITPYDATHLGH) is the 'HIGH' region element. Residues 159 to 164 (ERGGDP) carry the 'ERGGDP' region motif. Position 199 (Trp-199) interacts with L-cysteinyl-5'-AMP. Position 203 (Cys-203) interacts with Zn(2+). 221 to 223 (GSD) is an L-cysteinyl-5'-AMP binding site. Zn(2+) is bound at residue His-228. Residue Ile-255 coordinates L-cysteinyl-5'-AMP. The 'KMSKS' region motif lies at 261-265 (KMSKS).

The protein belongs to the class-I aminoacyl-tRNA synthetase family. MshC subfamily. As to quaternary structure, monomer. It depends on Zn(2+) as a cofactor.

The catalysed reaction is 1D-myo-inositol 2-amino-2-deoxy-alpha-D-glucopyranoside + L-cysteine + ATP = 1D-myo-inositol 2-(L-cysteinylamino)-2-deoxy-alpha-D-glucopyranoside + AMP + diphosphate + H(+). In terms of biological role, catalyzes the ATP-dependent condensation of GlcN-Ins and L-cysteine to form L-Cys-GlcN-Ins. The polypeptide is L-cysteine:1D-myo-inositol 2-amino-2-deoxy-alpha-D-glucopyranoside ligase (Mycobacterium avium (strain 104)).